The primary structure comprises 277 residues: 2-dehydro-3-deoxyphosphooctonate aldolase (277 aa).

This sequence belongs to the KdsA family.

The protein resides in the cytoplasm. The catalysed reaction is D-arabinose 5-phosphate + phosphoenolpyruvate + H2O = 3-deoxy-alpha-D-manno-2-octulosonate-8-phosphate + phosphate. The protein operates within carbohydrate biosynthesis; 3-deoxy-D-manno-octulosonate biosynthesis; 3-deoxy-D-manno-octulosonate from D-ribulose 5-phosphate: step 2/3. It participates in bacterial outer membrane biogenesis; lipopolysaccharide biosynthesis. The protein is 2-dehydro-3-deoxyphosphooctonate aldolase of Brucella abortus (strain S19).